The following is a 21-amino-acid chain: Cupiennin-6d (21 aa).

S21 is modified (serine amide).

In terms of tissue distribution, expressed by the venom gland.

The protein resides in the secreted. The polypeptide is Cupiennin-6d (Cupiennius salei (American wandering spider)).